Reading from the N-terminus, the 401-residue chain is Protein nanos (401 aa).

The segment at 181–207 (LGRMSYGSAPPQVQMPPQQQHQQQQGL) is disordered. Positions 190 to 205 (PPQVQMPPQQQHQQQQ) are enriched in low complexity. The segment at 318–372 (HCVFCENNNEPEAVINSHSVRDNFNRVLCPKLRTYVCPICGASGDSAHTIKYCPK) adopts a Nanos-type zinc-finger fold. Zn(2+) is bound by residues C319, C322, H335, C346, C354, C357, H365, and C370. 2 consecutive short sequence motifs (C2HC) follow at residues 319-346 (CVFCENNNEPEAVINSHSVRDNFNRVLC) and 354-370 (CPICGASGDSAHTIKYC).

The protein belongs to the nanos family. Interacts with pum and brat. Interacts with cup. Interacts with mei-P26; possibly involved in regulation of brat levels. Interacts with wh; may be involved in mei-P26-dependent derepression of the BMP signaling pathway. Acts via the formation of a quaternary complex composed of pum, nanos, brat and the 3'-UTR mRNA of hb. Binds RNA with no specificity. In terms of tissue distribution, posterior part of the embryo. While the transcript is present throughout the embryo, nanos translation is controlled by smg, and the protein is found in pole plasm and pole cells. In the female ovary expressed in germline stem cells, precystoblasts and in maturing cystoblasts; in early cystoblasts expression is post-transcriptionally repressed by bam in a 3'UTR-dependent manner.

Its subcellular location is the cytoplasm. It is found in the cytoplasmic ribonucleoprotein granule. Its function is as follows. Maternal RNA-binding protein that is required for germ cells proliferation and self-renewal. Acts by forming a complex with pum and brat that regulates translation and mRNA stability. The complex binds to the Nanos Response Element (NRE), a 16 bp sequence in the hb mRNA 3'-UTR and prevents its translation. Controls posterior development. Rescuing factor for the abdominal defect of posterior group mutants. The other posterior group genes are not required for nanos function but rather play a role in localization or distribution of nanos protein. This is Protein nanos from Drosophila melanogaster (Fruit fly).